We begin with the raw amino-acid sequence, 309 residues long: D-alanine--D-alanine ligase (309 aa).

In terms of domain architecture, ATP-grasp spans 104–301; the sequence is KQIWQGSDLP…FDALCVEILA (198 aa). 130–185 is a binding site for ATP; that stretch reads VASLGLPVIIKPVHEGSSIGMSKVEKIEDFAPAIEKATAHDAIVMAEKWITGREYT. Mg(2+) contacts are provided by D255, E268, and N270.

The protein belongs to the D-alanine--D-alanine ligase family. The cofactor is Mg(2+). It depends on Mn(2+) as a cofactor.

The protein resides in the cytoplasm. It carries out the reaction 2 D-alanine + ATP = D-alanyl-D-alanine + ADP + phosphate + H(+). The protein operates within cell wall biogenesis; peptidoglycan biosynthesis. Functionally, cell wall formation. This chain is D-alanine--D-alanine ligase, found in Acinetobacter baylyi (strain ATCC 33305 / BD413 / ADP1).